The sequence spans 165 residues: Small ribosomal subunit protein uS5 (165 aa).

The S5 DRBM domain occupies 10–73; sequence LVEKLVAVDR…EAARRNMITV (64 aa).

This sequence belongs to the universal ribosomal protein uS5 family. Part of the 30S ribosomal subunit. Contacts proteins S4 and S8.

With S4 and S12 plays an important role in translational accuracy. Functionally, located at the back of the 30S subunit body where it stabilizes the conformation of the head with respect to the body. The protein is Small ribosomal subunit protein uS5 of Acinetobacter baumannii (strain AB307-0294).